We begin with the raw amino-acid sequence, 37 residues long: Esculentin-2B (37 aa).

An intrachain disulfide couples cysteine 31 to cysteine 37.

In terms of tissue distribution, expressed by the skin glands.

It is found in the secreted. Its function is as follows. Antibacterial activity against Gram-positive bacterium S.aureus and Gram-negative bacterium E.coli. Has activity against C.albicans. This is Esculentin-2B from Lithobates berlandieri (Rio Grande leopard frog).